The chain runs to 406 residues: Tryptophan 2,3-dioxygenase (406 aa).

Residues 72 to 76 (FIVTH) and arginine 144 contribute to the substrate site. Histidine 328 lines the heme pocket. A substrate-binding site is contributed by threonine 342.

This sequence belongs to the tryptophan 2,3-dioxygenase family. In terms of assembly, homotetramer. Dimer of dimers. It depends on heme as a cofactor.

The catalysed reaction is L-tryptophan + O2 = N-formyl-L-kynurenine. Its pathway is amino-acid degradation; L-tryptophan degradation via kynurenine pathway; L-kynurenine from L-tryptophan: step 1/2. Its function is as follows. Heme-dependent dioxygenase that catalyzes the oxidative cleavage of the L-tryptophan (L-Trp) pyrrole ring and converts L-tryptophan to N-formyl-L-kynurenine. Catalyzes the oxidative cleavage of the indole moiety. The polypeptide is Tryptophan 2,3-dioxygenase (Xenopus laevis (African clawed frog)).